A 334-amino-acid polypeptide reads, in one-letter code: Nucleoid-associated protein YPK_2796 (334 aa).

It belongs to the YejK family.

The protein localises to the cytoplasm. Its subcellular location is the nucleoid. This Yersinia pseudotuberculosis serotype O:3 (strain YPIII) protein is Nucleoid-associated protein YPK_2796.